A 396-amino-acid chain; its full sequence is NADH-quinone oxidoreductase subunit D (396 aa).

It belongs to the complex I 49 kDa subunit family. As to quaternary structure, NDH-1 is composed of 14 different subunits. Subunits NuoB, C, D, E, F, and G constitute the peripheral sector of the complex.

The protein resides in the cell inner membrane. The catalysed reaction is a quinone + NADH + 5 H(+)(in) = a quinol + NAD(+) + 4 H(+)(out). In terms of biological role, NDH-1 shuttles electrons from NADH, via FMN and iron-sulfur (Fe-S) centers, to quinones in the respiratory chain. The immediate electron acceptor for the enzyme in this species is believed to be ubiquinone. Couples the redox reaction to proton translocation (for every two electrons transferred, four hydrogen ions are translocated across the cytoplasmic membrane), and thus conserves the redox energy in a proton gradient. The polypeptide is NADH-quinone oxidoreductase subunit D (Bartonella tribocorum (strain CIP 105476 / IBS 506)).